The sequence spans 302 residues: Serine/threonine-protein phosphatase alpha-3 isoform (302 aa).

Residues aspartate 62, histidine 64, aspartate 90, and asparagine 122 each coordinate Mn(2+). Histidine 123 (proton donor) is an active-site residue. Histidine 171 and histidine 246 together coordinate Mn(2+).

The protein belongs to the PPP phosphatase family. PP-1 subfamily. As to quaternary structure, interacts with Nop17l. It depends on Mn(2+) as a cofactor.

It catalyses the reaction O-phospho-L-seryl-[protein] + H2O = L-seryl-[protein] + phosphate. The catalysed reaction is O-phospho-L-threonyl-[protein] + H2O = L-threonyl-[protein] + phosphate. The sequence is that of Serine/threonine-protein phosphatase alpha-3 isoform (Pp1-13C) from Drosophila melanogaster (Fruit fly).